The chain runs to 366 residues: Phospho-2-dehydro-3-deoxyheptonate aldolase (366 aa).

It belongs to the class-I DAHP synthase family.

The enzyme catalyses D-erythrose 4-phosphate + phosphoenolpyruvate + H2O = 7-phospho-2-dehydro-3-deoxy-D-arabino-heptonate + phosphate. It participates in metabolic intermediate biosynthesis; chorismate biosynthesis; chorismate from D-erythrose 4-phosphate and phosphoenolpyruvate: step 1/7. Functionally, stereospecific condensation of phosphoenolpyruvate (PEP) and D-erythrose-4-phosphate (E4P) giving rise to 3-deoxy-D-arabino-heptulosonate-7-phosphate (DAHP). The sequence is that of Phospho-2-dehydro-3-deoxyheptonate aldolase (aroG) from Corynebacterium glutamicum (strain ATCC 13032 / DSM 20300 / JCM 1318 / BCRC 11384 / CCUG 27702 / LMG 3730 / NBRC 12168 / NCIMB 10025 / NRRL B-2784 / 534).